Reading from the N-terminus, the 203-residue chain is Cilia- and flagella-associated protein 20 (203 aa).

Belongs to the CFAP20 family.

Its subcellular location is the nucleus. The protein localises to the cytoplasm. The protein resides in the cytoskeleton. It localises to the microtubule organizing center. It is found in the centrosome. Its subcellular location is the centriole. The protein localises to the cilium basal body. The protein resides in the cilium axoneme. In terms of biological role, cilium- and flagellum-specific protein that plays a role in axonemal structure organization and motility. Microtubule inner protein (MIP) part of the dynein-decorated doublet microtubules (DMTs) in cilia axoneme, which is required for motile cilia beating. Involved in the regulation of the size and morphology of cilia. Required for axonemal microtubules polyglutamylation. The sequence is that of Cilia- and flagella-associated protein 20 from Caenorhabditis briggsae.